A 313-amino-acid polypeptide reads, in one-letter code: Beta-lactamase (313 aa).

Positions 1–15 (MQRIGVTDYTILGTV) are cleaved as a signal peptide. S190 acts as the Acyl-ester intermediate in catalysis.

Belongs to the class-C beta-lactamase family.

It catalyses the reaction a beta-lactam + H2O = a substituted beta-amino acid. Functionally, upon expression in E.coli enables the latter to utilize penicillin as a carbon source. The chain is Beta-lactamase (penA) from Burkholderia multivorans (strain ATCC 17616 / 249).